The primary structure comprises 438 residues: Serine hydroxymethyltransferase (438 aa).

(6S)-5,6,7,8-tetrahydrofolate contacts are provided by residues L119 and 123-125 (GHL). Position 228 is an N6-(pyridoxal phosphate)lysine (K228). 370 to 372 (SPF) provides a ligand contact to (6S)-5,6,7,8-tetrahydrofolate.

This sequence belongs to the SHMT family. As to quaternary structure, homodimer. Pyridoxal 5'-phosphate is required as a cofactor.

The protein localises to the cytoplasm. It carries out the reaction (6R)-5,10-methylene-5,6,7,8-tetrahydrofolate + glycine + H2O = (6S)-5,6,7,8-tetrahydrofolate + L-serine. Its pathway is one-carbon metabolism; tetrahydrofolate interconversion. It functions in the pathway amino-acid biosynthesis; glycine biosynthesis; glycine from L-serine: step 1/1. In terms of biological role, catalyzes the reversible interconversion of serine and glycine with tetrahydrofolate (THF) serving as the one-carbon carrier. This reaction serves as the major source of one-carbon groups required for the biosynthesis of purines, thymidylate, methionine, and other important biomolecules. Also exhibits THF-independent aldolase activity toward beta-hydroxyamino acids, producing glycine and aldehydes, via a retro-aldol mechanism. The chain is Serine hydroxymethyltransferase from Pelodictyon phaeoclathratiforme (strain DSM 5477 / BU-1).